A 481-amino-acid chain; its full sequence is 2-succinylbenzoate--CoA ligase (481 aa).

The protein belongs to the ATP-dependent AMP-binding enzyme family. MenE subfamily.

It catalyses the reaction 2-succinylbenzoate + ATP + CoA = 2-succinylbenzoyl-CoA + AMP + diphosphate. It functions in the pathway quinol/quinone metabolism; 1,4-dihydroxy-2-naphthoate biosynthesis; 1,4-dihydroxy-2-naphthoate from chorismate: step 5/7. The protein operates within quinol/quinone metabolism; menaquinone biosynthesis. Functionally, converts 2-succinylbenzoate (OSB) to 2-succinylbenzoyl-CoA (OSB-CoA). This is 2-succinylbenzoate--CoA ligase from Bacillus cereus (strain ATCC 10987 / NRS 248).